A 712-amino-acid polypeptide reads, in one-letter code: MFDTHTVEIEWAGRPLKLETGKIARQADGAVLATYGETVVLATVVSAKAPKAGQDFFPLTVNYQEKTYAAGKIPGGYFKREGRPSEKETLVSRLIDRPIRPLFPEGYKNDTQVVVTVIQHDLENDPDVLSMVATSAALTLSGVPFMGPVGGARVGYINGEYVLNPHLDEMDESSLDLVVAGTYDAVLMVESEAKELNEDVMLGAVMFGHKGFQPVLDAIIKLAEVAAKEPRDFQPADYSALESEMLGLAEGELRNAYKITQKADRYAAVDAVKAKVKAHFLPEEGEAKYTAEEVGAIFKHLQAKIVRWNILDTKSRIDGRNLETVRPIVSEVGLLPRTHGSALFTRGETQAIVVATLGTGEDEQYVDSLTGMYKERFLLHYNFPPYSVGETGRMGSPGRREIGHGKLAWRAIRPMLPTPEQFPYTLRVVSEITESNGSSSMATVCGTSLALMDAGVPLAKPVAGIAMGLILEGDRFAVLSDILGDEDHLGDMDFKVAGTADGITSLQMDIKITGITEEIMKVALGQAQGGRVHILGEMSKAITESRGQLGEFAPRIEVMNIPVDKIREVIGSGGKVIREIVEKTGAKINIEDDGTVKIASSSGKEIEAARKWIHSIVAEPEIGQVYEGTVVKTADFGAFVNFFGARDGLVHISQLASERVAKTQDVVKEGDKVWVKLLGFDERGKVRLSMKVVDQATGQEIPNEKKKEEAAE.

The Mg(2+) site is built by Asp-487 and Asp-493. A KH domain is found at 554–613 (PRIEVMNIPVDKIREVIGSGGKVIREIVEKTGAKINIEDDGTVKIASSSGKEIEAARKWI). Positions 623 to 691 (GQVYEGTVVK…ERGKVRLSMK (69 aa)) constitute an S1 motif domain.

It belongs to the polyribonucleotide nucleotidyltransferase family. Mg(2+) is required as a cofactor.

The protein resides in the cytoplasm. The enzyme catalyses RNA(n+1) + phosphate = RNA(n) + a ribonucleoside 5'-diphosphate. Its function is as follows. Involved in mRNA degradation. Catalyzes the phosphorolysis of single-stranded polyribonucleotides processively in the 3'- to 5'-direction. This is Polyribonucleotide nucleotidyltransferase from Rhizobium johnstonii (strain DSM 114642 / LMG 32736 / 3841) (Rhizobium leguminosarum bv. viciae).